Reading from the N-terminus, the 860-residue chain is Alanine--tRNA ligase (860 aa).

Residues His553, His557, Cys655, and His659 each coordinate Zn(2+).

Belongs to the class-II aminoacyl-tRNA synthetase family. Requires Zn(2+) as cofactor.

The protein localises to the cytoplasm. The catalysed reaction is tRNA(Ala) + L-alanine + ATP = L-alanyl-tRNA(Ala) + AMP + diphosphate. Its function is as follows. Catalyzes the attachment of alanine to tRNA(Ala) in a two-step reaction: alanine is first activated by ATP to form Ala-AMP and then transferred to the acceptor end of tRNA(Ala). Also edits incorrectly charged Ser-tRNA(Ala) and Gly-tRNA(Ala) via its editing domain. In Legionella pneumophila (strain Paris), this protein is Alanine--tRNA ligase.